A 394-amino-acid chain; its full sequence is Dual-specificity RNA methyltransferase RlmN (394 aa).

The Proton acceptor role is filled by Glu115. The Radical SAM core domain occupies 121–360 (EADRATLCVS…VIVRKTRGDD (240 aa)). An intrachain disulfide couples Cys128 to Cys365. Cys135, Cys139, and Cys142 together coordinate [4Fe-4S] cluster. Residues 189 to 190 (GE), Ser221, 243 to 245 (SLH), and Asn322 each bind S-adenosyl-L-methionine. Residue Cys365 is the S-methylcysteine intermediate of the active site.

The protein belongs to the radical SAM superfamily. RlmN family. It depends on [4Fe-4S] cluster as a cofactor.

The protein localises to the cytoplasm. The enzyme catalyses adenosine(2503) in 23S rRNA + 2 reduced [2Fe-2S]-[ferredoxin] + 2 S-adenosyl-L-methionine = 2-methyladenosine(2503) in 23S rRNA + 5'-deoxyadenosine + L-methionine + 2 oxidized [2Fe-2S]-[ferredoxin] + S-adenosyl-L-homocysteine. The catalysed reaction is adenosine(37) in tRNA + 2 reduced [2Fe-2S]-[ferredoxin] + 2 S-adenosyl-L-methionine = 2-methyladenosine(37) in tRNA + 5'-deoxyadenosine + L-methionine + 2 oxidized [2Fe-2S]-[ferredoxin] + S-adenosyl-L-homocysteine. Its function is as follows. Specifically methylates position 2 of adenine 2503 in 23S rRNA and position 2 of adenine 37 in tRNAs. m2A2503 modification seems to play a crucial role in the proofreading step occurring at the peptidyl transferase center and thus would serve to optimize ribosomal fidelity. The chain is Dual-specificity RNA methyltransferase RlmN from Pasteurella multocida (strain Pm70).